The chain runs to 490 residues: UDP-glycosyltransferase 84A1 (490 aa).

The Proton acceptor role is filled by H30. Position 30 (H30) interacts with an anthocyanidin. UDP-alpha-D-glucose contacts are provided by Q358, H373, W376, N377, S378, and E381. G396 provides a ligand contact to an anthocyanidin. The UDP-alpha-D-glucose site is built by D397 and Q398.

Belongs to the UDP-glycosyltransferase family. Expressed in roots, flowers and siliques.

The catalysed reaction is (E)-4-coumarate + UDP-alpha-D-glucose = 4-O-(beta-D-glucosyl)-trans-4-coumarate + UDP + H(+). It carries out the reaction (E)-ferulate + UDP-alpha-D-glucose = 1-O-[(E)-feruloyl]-beta-D-glucose + UDP. The enzyme catalyses (E)-caffeate + UDP-alpha-D-glucose = 1-O-[(E)-caffeoyl]-beta-D-glucose + UDP. It catalyses the reaction (E)-sinapate + UDP-alpha-D-glucose = 1-O-(trans-sinapoyl)-beta-D-glucose + UDP. The catalysed reaction is (E)-cinnamate + UDP-alpha-D-glucose = 1-O-(trans-cinnamoyl)-beta-D-glucose + UDP. UDP-glucosyltransferase that forms glucose esters with phenylpropanoids. Glucosylates 4-coumarate, ferulate, caffeate, sinapate and cinnamate. Can glucosylate the phytotoxic xenobiotic compound 2,4,5-trichlorophenol (TCP). This chain is UDP-glycosyltransferase 84A1, found in Arabidopsis thaliana (Mouse-ear cress).